A 202-amino-acid chain; its full sequence is LexA repressor (202 aa).

The segment at residues 28 to 48 (RAEIAQELGFKSPNAAEEHLK) is a DNA-binding region (H-T-H motif). Residues S123 and K160 each act as for autocatalytic cleavage activity in the active site.

Belongs to the peptidase S24 family. In terms of assembly, homodimer.

It carries out the reaction Hydrolysis of Ala-|-Gly bond in repressor LexA.. Represses a number of genes involved in the response to DNA damage (SOS response), including recA and lexA. In the presence of single-stranded DNA, RecA interacts with LexA causing an autocatalytic cleavage which disrupts the DNA-binding part of LexA, leading to derepression of the SOS regulon and eventually DNA repair. This Pseudomonas putida (Arthrobacter siderocapsulatus) protein is LexA repressor.